The primary structure comprises 777 residues: Elongation factor G, mitochondrial (777 aa).

The region spanning L34–M338 is the tr-type G domain. GTP contacts are provided by residues A43–T50, D136–H140, and N190–D193.

The protein belongs to the TRAFAC class translation factor GTPase superfamily. Classic translation factor GTPase family. EF-G/EF-2 subfamily.

It is found in the mitochondrion. It functions in the pathway protein biosynthesis; polypeptide chain elongation. Its function is as follows. Mitochondrial GTPase that catalyzes the GTP-dependent ribosomal translocation step during translation elongation. During this step, the ribosome changes from the pre-translocational (PRE) to the post-translocational (POST) state as the newly formed A-site-bound peptidyl-tRNA and P-site-bound deacylated tRNA move to the P and E sites, respectively. Catalyzes the coordinated movement of the two tRNA molecules, the mRNA and conformational changes in the ribosome. This chain is Elongation factor G, mitochondrial, found in Malassezia globosa (strain ATCC MYA-4612 / CBS 7966) (Dandruff-associated fungus).